A 116-amino-acid chain; its full sequence is MENKSKLIVLSILFTPNNILYYATQLNGNIIFWTSSGVHKQKNTKKVTLISITTVINYIKYKSVNYKGIHIRTKGFSKNKKLVIKQLKQSTLNILSISDKISWPHNGCKKRKIRRI.

This sequence belongs to the universal ribosomal protein uS11 family.

The protein resides in the mitochondrion. The protein is Small ribosomal subunit protein uS11m (RPS11) of Chondrus crispus (Carrageen Irish moss).